We begin with the raw amino-acid sequence, 606 residues long: MKDLLMPIQENIRNFSIIAHIDHGKSTLADRILEYTNLVSDREKRDQYLDKMELERERGITIKAQTVRIPYITADGKTYILNLIDTPGHVDFNYEVSRSLSACEGSLLVIDTTQGVEAQTLANVYLALEHNHEVIPILNKIDLPSADIEKVKAEIEETIGLDCSTAISISAKTGLGVDSVLEAIVQQLPAPKGDPNNPLKALIFDSWYDAYQGVVVLFRIMDGTIKKNDIIKLFSTEKSYEITRLGVFSPEAIDIPQLSAGEVGFLCGNIKTLGDAKVGDTITLLHNPCTKAIPGFKEIQPVVFCGLYPSESSDYDILKAALEKLQLNDAAFSWEPETSQALGFGFRCGFLGLLHMEIIQERLEREFQVELIATAPSVIYKVETTDGKIQEIDNPSKLPELGKIVHLYEPYVHIDIHVPSEFVGNVLKLCEEKRGIQKNIAYPAQQRVIITYELPFSEIVFDFFDRLKSATKGYASMDYEVIDYRISNLVRLDILLNGEPVDALAVIVHRDKAYHYGRSLAIKLKKTIPRQMFEVAIQAAIGQKVIARESISALRKNVTAKCYGGDITRKRKLLEKQKEGKKRMKRMGNVELPQEAFLAALQMGDD.

Residues 10 to 192 (ENIRNFSIIA…AIVQQLPAPK (183 aa)) enclose the tr-type G domain. GTP is bound by residues 22–27 (DHGKST) and 139–142 (NKID).

This sequence belongs to the TRAFAC class translation factor GTPase superfamily. Classic translation factor GTPase family. LepA subfamily.

It localises to the cell membrane. It carries out the reaction GTP + H2O = GDP + phosphate + H(+). Required for accurate and efficient protein synthesis under certain stress conditions. May act as a fidelity factor of the translation reaction, by catalyzing a one-codon backward translocation of tRNAs on improperly translocated ribosomes. Back-translocation proceeds from a post-translocation (POST) complex to a pre-translocation (PRE) complex, thus giving elongation factor G a second chance to translocate the tRNAs correctly. Binds to ribosomes in a GTP-dependent manner. The sequence is that of Elongation factor 4 from Lawsonia intracellularis (strain PHE/MN1-00).